The sequence spans 343 residues: ATP-dependent 6-phosphofructokinase (343 aa).

ATP contacts are provided by residues Gly-10 and 103-106 (GEGT). Glu-104 contributes to the Mg(2+) binding site. Residues 126 to 128 (TID), Arg-163, 170 to 172 (MGR), Glu-223, Arg-267, and 273 to 276 (HVQR) contribute to the substrate site. Asp-128 functions as the Proton acceptor in the catalytic mechanism.

This sequence belongs to the phosphofructokinase type A (PFKA) family. Mixed-substrate PFK group III subfamily. In terms of assembly, homodimer or homotetramer. Mg(2+) serves as cofactor.

It localises to the cytoplasm. It carries out the reaction beta-D-fructose 6-phosphate + ATP = beta-D-fructose 1,6-bisphosphate + ADP + H(+). It functions in the pathway carbohydrate degradation; glycolysis; D-glyceraldehyde 3-phosphate and glycerone phosphate from D-glucose: step 3/4. Catalyzes the phosphorylation of D-fructose 6-phosphate to fructose 1,6-bisphosphate by ATP, the first committing step of glycolysis. In Mycobacterium leprae (strain TN), this protein is ATP-dependent 6-phosphofructokinase.